The sequence spans 779 residues: MNNKILEQLEFNKVKELILPYLKTEQSQEELSELEPMTEAPKIEKSFNEISDMEQIFVEHHSFGIVSLSSISESLKRLELSADLNIQELLVIKKVLQSSSDMIHFYSDLDNVSFQSLDRLFENLEQFPNLQGSFQAINDGGFLEHFASPELERIRRQLTNSERRVRQILQDMLKEKAELLSENLIASRSGRSVLPVKNTYRNRISGVVHDISSSGSTVYIEPRAVVTLNEEITQLRADERHEESRILHAFSDLLRPHVATIRNNAWILGHLDFVRAKYLFMSDNKATIPEISNDSTLALINVRHPLLSNPVANDLHFDQDLTAIVITGPNTGGKTIMLKTLGLAQLMGQSGLPVLADKGSKIAVFNNIFADIGDEQSIEQSLSTFSSHMTHIVSILNEADHNSLVLFDELGAGTDPQEGASLAMAILEHLRLSNIKTMATTHYPELKAYGIETNFVENASMEFDAETLSPTYRFMQGVPGRSNAFEIASRLGLAPFIVKQAKQMTDSDSDVNRIIEQLEAQTLETRRRLDHIKEIEQENLKFNRAVKKLYNEFSHERDKELEKIYQEAQEIVDMALNESDTILKKLNDKSQLKPHEIIDAKAQIKKLAPQVDLSKNKVLNKAKKIKAARAPRIGDDIIVTSYGQRGTLTSQLKDGRWEAQVGIIKMTLTQDEFTLVRVQEEQKVKSKQINVVKKADSSGPRARLDLRGKRYEEAMQELDNFIDQALLNNMGQVDIIHGIGTGVIREGVTKYLRRNKHVKHFAYAPQNAGGSGATIVTLG.

328 to 335 (GPNTGGKT) serves as a coordination point for ATP. Residues 704-779 (LDLRGKRYEE…GSGATIVTLG (76 aa)) form the Smr domain.

The protein belongs to the DNA mismatch repair MutS family. MutS2 subfamily. As to quaternary structure, homodimer. Binds to stalled ribosomes, contacting rRNA.

In terms of biological role, endonuclease that is involved in the suppression of homologous recombination and thus may have a key role in the control of bacterial genetic diversity. Functionally, acts as a ribosome collision sensor, splitting the ribosome into its 2 subunits. Detects stalled/collided 70S ribosomes which it binds and splits by an ATP-hydrolysis driven conformational change. Acts upstream of the ribosome quality control system (RQC), a ribosome-associated complex that mediates the extraction of incompletely synthesized nascent chains from stalled ribosomes and their subsequent degradation. Probably generates substrates for RQC. The protein is Endonuclease MutS2 of Streptococcus agalactiae serotype III (strain NEM316).